The sequence spans 225 residues: Reticulon-like protein B9 (225 aa).

Residues 39–224 (VADILLWREP…PRGTVKNKKF (186 aa)) enclose the Reticulon domain. The next 3 membrane-spanning stretches (helical) occupy residues 50-70 (IAAT…VVEY), 72-92 (FITL…IWST), and 152-172 (YIVS…IGFV).

The protein localises to the endoplasmic reticulum membrane. The polypeptide is Reticulon-like protein B9 (RTNLB9) (Arabidopsis thaliana (Mouse-ear cress)).